Here is a 348-residue protein sequence, read N- to C-terminus: Ion-translocating oxidoreductase complex subunit D (348 aa).

Helical transmembrane passes span leucine 15–alanine 35, tyrosine 36–isoleucine 56, proline 67–serine 87, isoleucine 88–alanine 108, and valine 125–isoleucine 145. Threonine 186 carries the FMN phosphoryl threonine modification. Transmembrane regions (helical) follow at residues leucine 212–isoleucine 232, isoleucine 241–proline 261, leucine 265–threonine 285, leucine 298–proline 318, and alanine 320–glutamine 340.

The protein belongs to the NqrB/RnfD family. As to quaternary structure, the complex is composed of six subunits: RnfA, RnfB, RnfC, RnfD, RnfE and RnfG. FMN is required as a cofactor.

It localises to the cell inner membrane. In terms of biological role, part of a membrane-bound complex that couples electron transfer with translocation of ions across the membrane. This Actinobacillus pleuropneumoniae serotype 5b (strain L20) protein is Ion-translocating oxidoreductase complex subunit D.